We begin with the raw amino-acid sequence, 277 residues long: 3-methyl-2-oxobutanoate hydroxymethyltransferase (277 aa).

Residues D53 and D96 each contribute to the Mg(2+) site. 3-methyl-2-oxobutanoate is bound by residues 53 to 54 (DS), D96, and K126. E128 is a Mg(2+) binding site. The Proton acceptor role is filled by E195.

Belongs to the PanB family. As to quaternary structure, homodecamer; pentamer of dimers. Mg(2+) serves as cofactor.

It localises to the cytoplasm. The enzyme catalyses 3-methyl-2-oxobutanoate + (6R)-5,10-methylene-5,6,7,8-tetrahydrofolate + H2O = 2-dehydropantoate + (6S)-5,6,7,8-tetrahydrofolate. It participates in cofactor biosynthesis; (R)-pantothenate biosynthesis; (R)-pantoate from 3-methyl-2-oxobutanoate: step 1/2. Catalyzes the reversible reaction in which hydroxymethyl group from 5,10-methylenetetrahydrofolate is transferred onto alpha-ketoisovalerate to form ketopantoate. This chain is 3-methyl-2-oxobutanoate hydroxymethyltransferase, found in Prosthecochloris aestuarii (strain DSM 271 / SK 413).